A 685-amino-acid polypeptide reads, in one-letter code: Putative alpha-1,3-mannosyltransferase MNN14 (685 aa).

Residues 1–13 (MGLLSIPYQSKSK) are Cytoplasmic-facing. The helical transmembrane segment at 14–34 (LWIAIFLVVWSLISMHFIWQS) threads the bilayer. At 35–685 (QANSGLILKN…EIWMRGYNYL (651 aa)) the chain is on the lumenal side. 4 N-linked (GlcNAc...) asparagine glycosylation sites follow: Asn-199, Asn-338, Asn-408, and Asn-556.

Belongs to the MNN1/MNT family.

It localises to the golgi apparatus membrane. It participates in protein modification; protein glycosylation. Its function is as follows. Responsible for addition of the terminal mannose residues to the outer chain of core N-linked polysaccharides and to O-linked mannotriose. Implicated in late Golgi modifications. Involved in virulence. The chain is Putative alpha-1,3-mannosyltransferase MNN14 (MNN14) from Candida albicans (strain SC5314 / ATCC MYA-2876) (Yeast).